The chain runs to 609 residues: UvrABC system protein C (609 aa).

The GIY-YIG domain maps to 19–97 (ISPGCYLWKS…IKKHNPRFNV (79 aa)). The UVR domain maps to 208–243 (ESLVGDLSIKMSASSNRMDFEKAARYRDMLQRIQNF).

This sequence belongs to the UvrC family. In terms of assembly, interacts with UvrB in an incision complex.

Its subcellular location is the cytoplasm. Functionally, the UvrABC repair system catalyzes the recognition and processing of DNA lesions. UvrC both incises the 5' and 3' sides of the lesion. The N-terminal half is responsible for the 3' incision and the C-terminal half is responsible for the 5' incision. This Leptospira borgpetersenii serovar Hardjo-bovis (strain JB197) protein is UvrABC system protein C.